A 291-amino-acid chain; its full sequence is Lectin (291 aa).

Positions 1–28 (MGISKKSQLVPLLAFITMFLMVVSRVSS) are cleaved as a signal peptide. A Ca(2+)-binding site is contributed by Asp-118. Arg-138 is an a carbohydrate binding site. Residues 147–162 (NIIKNSTNLDFNAAYN) constitute a propeptide, removed in mature form. 2 residues coordinate Mn(2+): Glu-170 and Asp-172. Residues Asp-172, Tyr-174, Asn-176, and Asp-181 each contribute to the Ca(2+) site. Tyr-174 is an a carbohydrate binding site. Mn(2+) is bound by residues Asp-181 and His-186. Lys-208 contacts Ca(2+). Ser-228 is a binding site for a carbohydrate. The propeptide at 281–291 (QLQDLRIASVV) is removed in mature form.

It belongs to the leguminous lectin family. The mature chain consists of residues 163-280 followed by residues 29-147. Concanavalin A-like lectins of the Diocleinae subtribe undergo proteolytic processing referred to as circular permutation. The propeptide is split into an N-terminal and a C-terminal part, the gamma and beta chain, respectively. These are then religated in beta-gamma order to form the mature alpha chain. The beta and gamma chains can often be detected in cell extracts.

In terms of biological role, D-mannose-binding lectin that also binds alpha-methyl-D-mannoside with even higher affinity. Has hemagglutinating activity against rabbit erythrocytes. Shows toxicity against the brine shrimp A.nauplii. Induces reversible paw edema and hypernociceptivity in rats. This is Lectin from Dioclea lasiophylla.